A 60-amino-acid chain; its full sequence is U1-theraphotoxin-Agm3a (60 aa).

A signal peptide spans 1 to 21 (MKFSVLVFILGLVLLLALSSA). A propeptide spanning residues 22-29 (TEMEENAR) is cleaved from the precursor. 3 disulfide bridges follow: C31-C45, C38-C50, and C44-C57.

It belongs to the neurotoxin 10 (Hwtx-1) family. 63 (VsTx1) subfamily. Expressed by the venom gland.

The protein localises to the secreted. In terms of biological role, inhibits sodium channels Nav1.7/SCN9A and potassium channels Kv11.1/KCNH2. Also binds the voltage-sensor domain of the potassium channel KvAP (from the archaeon Aeropyrum pernix) with very slow apparent binding kinetics and affects channel gating. Reaches its target by dynamically partitioning into anionic or zwitterionic headgroup lipid membranes. May bind to the open state of KvAP. In Acanthoscurria gomesiana (Tarantula spider), this protein is U1-theraphotoxin-Agm3a.